The chain runs to 197 residues: Probable GTP-binding protein EngB (197 aa).

In terms of domain architecture, EngB-type G spans 2–186 (KVKEVIFAGR…KRDLKQYLLS (185 aa)). GTP is bound by residues 10-17 (GRSNVGKS), 35-39 (GTTIR), 52-55 (DLPG), 132-135 (NKMD), and 166-168 (VCA). Mg(2+) is bound by residues serine 17 and threonine 37.

Belongs to the TRAFAC class TrmE-Era-EngA-EngB-Septin-like GTPase superfamily. EngB GTPase family. Mg(2+) serves as cofactor.

Necessary for normal cell division and for the maintenance of normal septation. This is Probable GTP-binding protein EngB from Archaeoglobus fulgidus (strain ATCC 49558 / DSM 4304 / JCM 9628 / NBRC 100126 / VC-16).